Consider the following 351-residue polypeptide: Transcriptional activator POG1 (351 aa).

The span at 1–27 (MKQEPHRQSEEKEKPKGPMAVEREHHT) shows a compositional bias: basic and acidic residues. Positions 1 to 56 (MKQEPHRQSEEKEKPKGPMAVEREHHTSLSSGTTMTASTGDESTNSRPVESSQTEK) are disordered. Positions 28-56 (SLSSGTTMTASTGDESTNSRPVESSQTEK) are enriched in polar residues. A phosphoserine mark is found at Ser-152 and Ser-168. Disordered stretches follow at residues 237-256 (GPQA…TPVM) and 280-351 (SMGP…PPPT). Polar residues-rich tracts occupy residues 241 to 256 (QLPT…TPVM) and 287 to 296 (IYGQQHQPQP). Ser-314 carries the phosphoserine modification.

Belongs to the POG1 family. In terms of processing, phosphorylated by CDC28.

The protein localises to the nucleus. Functionally, transcriptional activator which promotes cell cycle recovery with CLN2, after pheromone induced G1 arrest, probably inhibiting the ability of STE20 to activate the pheromone response pathway. Binds the promoters of genes that function in cell cycle regulation, cytoskeletal organization, and spindle assembly. May also be involved in stress-resistance. In Saccharomyces cerevisiae (strain YJM789) (Baker's yeast), this protein is Transcriptional activator POG1 (POG1).